A 200-amino-acid chain; its full sequence is NAD(P)H dehydrogenase (quinone) (200 aa).

The region spanning 4–191 is the Flavodoxin-like domain; that stretch reads VLVLYYSSYG…DIARYQGKHV (188 aa). FMN is bound by residues 10 to 15 and 79 to 81; these read SSYGHV and TRF. Y12 lines the NAD(+) pocket. W99 lines the substrate pocket. FMN is bound by residues 114–120 and H135; that span reads STGTQHG.

Belongs to the WrbA family. FMN is required as a cofactor.

It carries out the reaction a quinone + NADH + H(+) = a quinol + NAD(+). The catalysed reaction is a quinone + NADPH + H(+) = a quinol + NADP(+). The chain is NAD(P)H dehydrogenase (quinone) from Burkholderia vietnamiensis (strain G4 / LMG 22486) (Burkholderia cepacia (strain R1808)).